A 716-amino-acid polypeptide reads, in one-letter code: Cyclic nucleotide-gated ion channel 1 (716 aa).

Topologically, residues 1–97 (MNFRQEKFVR…QGPFLQRWNK (97 aa)) are cytoplasmic. The chain crosses the membrane as a helical span at residues 98-118 (IFVLACIIAVSLDPLFFYVPI). Residues 119–132 (IDDAKKCLGIDKKM) are Extracellular-facing. Residues 133–153 (EITASVLRSFTDVFYVLHIIF) traverse the membrane as a helical segment. Residues 154–187 (QFRTGFIAPSSRVFGRGVLVEDKREIAKRYLSSH) are Cytoplasmic-facing. The helical transmembrane segment at 188-208 (FIIDILAVLPLPQMVILIIIP) threads the bilayer. Over 209-220 (HMRGSSSLNTKN) the chain is Extracellular. The helical transmembrane segment at 221–241 (MLKFIVFFQYIPRFIRIYPLY) threads the bilayer. The Cytoplasmic portion of the chain corresponds to 242–259 (KEVTRTSGILTETAWAGA). The helical transmembrane segment at 260–280 (AFNLFLYMLASHVFGAFWYLF) threads the bilayer. The Extracellular segment spans residues 281-379 (SIERETVCWK…GQNLKTSTYI (99 aa)). Residues 380-400 (WEICFAVFISIAGLVLFSFLI) form a helical membrane-spanning segment. The Cytoplasmic portion of the chain corresponds to 401–716 (GNMQTYLQST…PAEPDFNSDD (316 aa)). A nucleoside 3',5'-cyclic phosphate contacts are provided by residues 486–610 (MFEK…SKQL) and Glu557. The tract at residues 602-617 (FRRLHSKQLRHTFRYY) is calmodulin-binding. The 30-residue stretch at 622 to 651 (KTWAACFIQAAWRRYIKKKLEESLKEEENR) folds into the IQ domain. A disordered region spans residues 689–716 (SVRKPRMPERMPPMLLQKPAEPDFNSDD).

It belongs to the cyclic nucleotide-gated cation channel (TC 1.A.1.5) family. Homotetramer or heterotetramer (Potential). Binds calmodulin-2/3/5 with a higher affinity than calmodulin-1/4. Expressed in the whole plant but only weakly in roots.

The protein resides in the cell membrane. In terms of biological role, acts as a cyclic nucleotide-gated ion channel. Can be activated by cyclic AMP which leads to an opening of the cation channel. May be responsible for cAMP-induced calcium entry in cells and thus should be involved in the calcium signal transduction. Could transport K(+), Na(+) and Pb(2+). The sequence is that of Cyclic nucleotide-gated ion channel 1 (CNGC1) from Arabidopsis thaliana (Mouse-ear cress).